Reading from the N-terminus, the 415-residue chain is E3 ubiquitin-protein ligase RNF135 (415 aa).

The RING-type zinc-finger motif lies at 21–67; it reads CIICQGLLDWPTTLPCGHSFCLQCLKDLWVSKRAGVDSCPWACPICR. Residues 181–206 are a coiled coil; it reads TFSASQKKIQEILRDLEKIQETLQGS. Positions 228 to 415 constitute a B30.2/SPRY domain; sequence PDQRYPVSRK…LTPGNYLEIL (188 aa).

In terms of assembly, homodimer. Interacts (homodimer) with RIGI (double-stranded RNA-bound oligomeric form); involved in both RIGI ubiquitination, oligomerization into filaments associated with viral RNAs and the bridging of these filaments. Interacts with UBE2D3 and UBE2N; E2 ubiquitin ligases involved in RNF135-mediated ubiquitination of RIGI and activation of the RIG-I signaling pathway. Interacts with PCBP2.

The protein localises to the cytoplasm. Its subcellular location is the stress granule. The catalysed reaction is S-ubiquitinyl-[E2 ubiquitin-conjugating enzyme]-L-cysteine + [acceptor protein]-L-lysine = [E2 ubiquitin-conjugating enzyme]-L-cysteine + N(6)-ubiquitinyl-[acceptor protein]-L-lysine.. Its pathway is protein modification; protein ubiquitination. Functionally, E2-dependent E3 ubiquitin-protein ligase that functions as a RIGI coreceptor in the sensing of viral RNAs in cell cytoplasm and the activation of the antiviral innate immune response. Together with the UBE2D3, UBE2N and UB2V1 E2 ligases, catalyzes the 'Lys-63'-linked polyubiquitination of RIGI oligomerized on viral RNAs, an essential step in the activation of the RIG-I signaling pathway. Through a ubiquitin-independent parallel mechanism, which consists in bridging RIGI filaments forming on longer viral RNAs, further activates the RIG-I signaling pathway. This second mechanism that synergizes with the ubiquitin-dependent one would thereby allow an RNA length-dependent regulation of the RIG-I signaling pathway. Associated with the E2 ligase UBE2N, also constitutively synthesizes unanchored 'Lys-63'-linked polyubiquitin chains that may also activate the RIG-I signaling pathway. In Rattus norvegicus (Rat), this protein is E3 ubiquitin-protein ligase RNF135.